Reading from the N-terminus, the 70-residue chain is Large ribosomal subunit protein eL38 (70 aa).

Lys-4 is covalently cross-linked (Glycyl lysine isopeptide (Lys-Gly) (interchain with G-Cter in SUMO2)). Lys-9 is subject to N6-acetyllysine; alternate. Lys-9 participates in a covalent cross-link: Glycyl lysine isopeptide (Lys-Gly) (interchain with G-Cter in SUMO2); alternate. Residue Lys-67 is modified to N6-acetyllysine.

The protein belongs to the eukaryotic ribosomal protein eL38 family. Component of the large ribosomal subunit.

It localises to the cytoplasm. Its function is as follows. Component of the large ribosomal subunit. The ribosome is a large ribonucleoprotein complex responsible for the synthesis of proteins in the cell. This Macaca fascicularis (Crab-eating macaque) protein is Large ribosomal subunit protein eL38 (RPL38).